Consider the following 629-residue polypeptide: Proteoglycan Cow (629 aa).

Positions 1–27 (MKHSPLIASACLALVLMSSSLIGSTEA) are cleaved as a signal peptide. 2 disordered regions span residues 118–186 (KRRV…ESKE) and 198–223 (GDKQ…DDDE). The span at 128–143 (DSQDAEDINNDDEDNS) shows a compositional bias: acidic residues. N-linked (GlcNAc...) asparagine glycosylation occurs at Asn-142. The segment covering 144–159 (SDGGSSNSSPTGTNNA) has biased composition (low complexity). Positions 167-186 (EETDDEDKSLSLGDDDESKE) are enriched in acidic residues. The region spanning 222 to 273 (DEELDNCKPCPVAKPTFLCGADNRTYSSLCRLDYHNCIHSTSIRIACKGFCP) is the Kazal-like domain. Cystine bridges form between Cys-228–Cys-258, Cys-231–Cys-251, and Cys-240–Cys-272. Residue Asn-244 is glycosylated (N-linked (GlcNAc...) asparagine). Residues 298 to 356 (SLDQQQQQQQQQQQQQQQQQAYKDSNNNNIMMNSGNIMGGNNNDFNTIMNDKEDNNRHN) form a disordered region. Over residues 301–340 (QQQQQQQQQQQQQQQQQAYKDSNNNNIMMNSGNIMGGNNN) the composition is skewed to low complexity. 2 consecutive EF-hand domains span residues 468–503 (ACKT…QNER) and 508–535 (FIDT…TDRP). Positions 481, 483, 485, 487, and 492 each coordinate Ca(2+). In terms of domain architecture, Thyroglobulin type-1 spans 533–594 (DRPCAAVRRR…NTRTRGKPNC (62 aa)). 3 disulfides stabilise this stretch: Cys-536–Cys-555, Cys-566–Cys-573, and Cys-575–Cys-594. The disordered stretch occupies residues 602-629 (ASLTSDDEDEGADDEDSAEGSADQMLVF). Positions 606 to 619 (SDDEDEGADDEDSA) are enriched in acidic residues. A compositionally biased stretch (low complexity) spans 620 to 629 (EGSADQMLVF).

As to quaternary structure, interacts (in heparan sulfate-bound form) with wg. In terms of processing, contains heparan sulfate O-linked oligosaccharides. As to expression, in the wing disk, detected throughout the disk where it is localized primarily to the apical surface but is also present at the basal surface (at protein level).

Its subcellular location is the secreted. Functionally, binds to the Wnt signaling protein wg, stabilizes it and promotes its extracellular distribution. This is required for establishment of a wg gradient during development to allow for regulation of target genes at different levels. In Drosophila melanogaster (Fruit fly), this protein is Proteoglycan Cow.